Here is a 361-residue protein sequence, read N- to C-terminus: Phospho-N-acetylmuramoyl-pentapeptide-transferase (361 aa).

Transmembrane regions (helical) follow at residues 28 to 48, 74 to 94, 99 to 119, 135 to 155, 167 to 187, 203 to 223, 236 to 256, 263 to 283, 288 to 308, and 338 to 358; these read LAVLVTLSLSFLIGPRLIKFL, TMGGIMIILSSCFSTLLLADL, IWITLFGFVSFSIIGFLDDYA, LLLQGIISLIVCILLEYTIDS, SLSMDLGYLYIFFAIFVIVGA, VPIALTAGSFALISYLVGNLI, TGELTIFCASIVGSCLGFLWF, VFMGDTGSLSLGGVLGIISVI, IVLGIVGGLFVIETISVIMQV, and KVVIRFWIISLIFVLIGLSSL.

Belongs to the glycosyltransferase 4 family. MraY subfamily. The cofactor is Mg(2+).

The protein resides in the cell inner membrane. The enzyme catalyses UDP-N-acetyl-alpha-D-muramoyl-L-alanyl-gamma-D-glutamyl-meso-2,6-diaminopimeloyl-D-alanyl-D-alanine + di-trans,octa-cis-undecaprenyl phosphate = di-trans,octa-cis-undecaprenyl diphospho-N-acetyl-alpha-D-muramoyl-L-alanyl-D-glutamyl-meso-2,6-diaminopimeloyl-D-alanyl-D-alanine + UMP. It functions in the pathway cell wall biogenesis; peptidoglycan biosynthesis. Catalyzes the initial step of the lipid cycle reactions in the biosynthesis of the cell wall peptidoglycan: transfers peptidoglycan precursor phospho-MurNAc-pentapeptide from UDP-MurNAc-pentapeptide onto the lipid carrier undecaprenyl phosphate, yielding undecaprenyl-pyrophosphoryl-MurNAc-pentapeptide, known as lipid I. This chain is Phospho-N-acetylmuramoyl-pentapeptide-transferase, found in Rickettsia bellii (strain OSU 85-389).